The following is a 575-amino-acid chain: MYDVIVIGAGWCGLVAAKTYLQVCPDARLLLVDGDSSIGGTWSKERLYPHLVAEAHHGLFEFSDLPMRRDTVLPDGRIPSAAVHDYLTEYATKFDLIDRIRLNTWIENVRREPAVIGDNEAPRWMLTVAGSCEQIPTKKIIIATGLTSEPYMPFLPGRQEFEGEVLHSKALGHPQTGDRISDPSVRHAVVYGGSKSAFDAVYLLLRAGKTVDWVIREQGGGPSMMTPLSILGQPSFRLNNSRLLALFSPHPFDTTVKASWWQRVMHRRSGRLAQLAVIGFWRILAYLLQRPWKYNQSANGRRLRPLLALDSLFWSPATLGVMTHPELWDDIHSGERVTIHRQAITALGKDKRVILDNGVELSADLVVCATGWHARHTLFKPEEQLAVGLPSAVSFDPKSQSEWINLQRKADQEIIEEMPILQKSPVPSVPFRCEDDYHLYRFIAPSREPPSHERSIAYVGFLRTAGAPIVYEAQSLWATAYLTGALDVPGPSERISEVARTNAWIRRRYICGRKVPFALFDFLPYVDMLYRDLGVNPHRKANMVAEICGLYQPRDFQGVVSEWLASRGVKDIENV.

A signal peptide spans 1-17 (MYDVIVIGAGWCGLVAA). Isoleucine 106 is an FAD binding site. 2 N-linked (GlcNAc...) asparagine glycosylation sites follow: asparagine 239 and asparagine 295.

Belongs to the FAD-binding monooxygenase family. It depends on FAD as a cofactor.

It functions in the pathway antifungal biosynthesis. Its function is as follows. FAD-dependent monooxygenase; part of the gene cluster that mediates the biosynthesis of the tetrahydropyranyl antifungal agent restricticin that acts as an inhibitor of CYP51 and blocks the ergosterol biosynthesis. The highly reducing polyketide synthase rstn3, the short chain dehydrogenase rstn4, the cyclase rstn5, the FAD-dependent monooxygenase rstn6 and the enoylreductase rstn7 are required to generate the first stable intermediate desmethylrestrictinol. Rstn3 with rstn7 biosynthesize the first polyketide chain intermediate that is reduced by rstn4, followed by epoxidation by rstn6 before 6-endo cyclization via epoxide opening by rstn5 leads to desmethylrestrictinol. The methyltransferase rstn1 then catalyzes the C4 O-methylation of desmethylrestrictinol to produce restrictinol, and the nonribosomal peptide synthetase rstn8 catalyzes the C3 esterification of restrictinol with glycine that leads to restricticin. In Aspergillus nomiae NRRL (strain ATCC 15546 / NRRL 13137 / CBS 260.88 / M93), this protein is FAD-dependent monooxygenase rstn6.